The following is a 583-amino-acid chain: Glucosidase 2 subunit beta (583 aa).

Residues methionine 1 to alanine 26 form the signal peptide. An intrachain disulfide couples cysteine 91 to cysteine 115. Residues asparagine 130 to lysine 252 adopt a coiled-coil conformation. Residues asparagine 455–proline 562 form the MRH domain. Disulfide bonds link cysteine 457/cysteine 470, cysteine 519/cysteine 548, and cysteine 533/cysteine 560. The short motif at lysine 580–leucine 583 is the Prevents secretion from ER element.

In terms of assembly, heterodimer of a catalytic subunit alpha and a subunit beta.

It localises to the endoplasmic reticulum. Subunit of glucosidase 2, which cleaves sequentially the 2 innermost alpha-1,3-linked glucose residues from the Glc(2)Man(9)GlcNAc(2) oligosaccharide precursor of immature glycoproteins in the endoplasmic reticulum (ER). Specifically required for the cleavage of the final glucose. The subunit beta retains the catalytic subunit alpha in the ER. The protein is Glucosidase 2 subunit beta of Mycosarcoma maydis (Corn smut fungus).